The primary structure comprises 236 residues: Phosphoribosylaminoimidazole-succinocarboxamide synthase (236 aa).

Belongs to the SAICAR synthetase family.

It carries out the reaction 5-amino-1-(5-phospho-D-ribosyl)imidazole-4-carboxylate + L-aspartate + ATP = (2S)-2-[5-amino-1-(5-phospho-beta-D-ribosyl)imidazole-4-carboxamido]succinate + ADP + phosphate + 2 H(+). It functions in the pathway purine metabolism; IMP biosynthesis via de novo pathway; 5-amino-1-(5-phospho-D-ribosyl)imidazole-4-carboxamide from 5-amino-1-(5-phospho-D-ribosyl)imidazole-4-carboxylate: step 1/2. This Campylobacter jejuni subsp. jejuni serotype O:6 (strain 81116 / NCTC 11828) protein is Phosphoribosylaminoimidazole-succinocarboxamide synthase.